The chain runs to 196 residues: uncharacterized protein (196 aa).

Residues 15 to 22, 68 to 71, Y107, and 123 to 126 each bind FAD; these read SQGKFNKT, GWWM, and TWNA.

It belongs to the oxidoreductase MdaB family. The cofactor is FAD.

This is an uncharacterized protein from Schizosaccharomyces pombe (strain 972 / ATCC 24843) (Fission yeast).